The following is a 131-amino-acid chain: Small ribosomal subunit protein uS8 (131 aa).

The protein belongs to the universal ribosomal protein uS8 family. Part of the 30S ribosomal subunit. Contacts proteins S5 and S12.

One of the primary rRNA binding proteins, it binds directly to 16S rRNA central domain where it helps coordinate assembly of the platform of the 30S subunit. In Legionella pneumophila (strain Paris), this protein is Small ribosomal subunit protein uS8.